The chain runs to 510 residues: Inositol-3-phosphate synthase 1 (510 aa).

Residues G70, G71, N72, N73, D143, I180, Q190, R193, T230, A231, N232, T233, G281, S282, D306, S309, N340, N341, D342, K355, G393, D394, D422, and S423 each coordinate NAD(+).

This sequence belongs to the myo-inositol 1-phosphate synthase family. Requires NAD(+) as cofactor.

It is found in the cytoplasm. It localises to the cytosol. Its subcellular location is the nucleus. It carries out the reaction D-glucose 6-phosphate = 1D-myo-inositol 3-phosphate. It participates in polyol metabolism; myo-inositol biosynthesis; myo-inositol from D-glucose 6-phosphate: step 1/2. Its function is as follows. Key enzyme in myo-inositol biosynthesis pathway that catalyzes the conversion of glucose 6-phosphate to 1-myo-inositol 1-phosphate in a NAD-dependent manner. May play a role in oxidative stress resistance and influences ascorbate levels. This is Inositol-3-phosphate synthase 1 from Populus euphratica (Euphrates poplar).